Reading from the N-terminus, the 507-residue chain is FLYWCH transcription factor 1 (507 aa).

The span at 1–26 (MYSPESMNSNISSPSPPSSSSLNAPS) shows a compositional bias: low complexity. Residues 1-51 (MYSPESMNSNISSPSPPSSSSLNAPSLADAPEVRSDDGEAETSEPSTSVTA) are disordered. An FLYWCH-type zinc finger spans residues 135-192 (KKTRLKVFSNGFFMTFDKLSSCQKKYFWRCEYKNTCKARMHTDIVTEKILTFIHEHNH).

Functionally, probable transcription factor. Binds to the DNA sequence motif 5'-[AG]GGCGCCG-3' in the promoters of target genes, including micro-RNA genes, in order to repress expression, and acting redundantly with flh-2. In Caenorhabditis elegans, this protein is FLYWCH transcription factor 1.